The sequence spans 485 residues: Cobyric acid synthase (485 aa).

Residues 250–436 (RVLVACPILP…VHGLLANADL (187 aa)) form the GATase cobBQ-type domain. Residue cysteine 332 is the Nucleophile of the active site. Histidine 428 is a catalytic residue.

This sequence belongs to the CobB/CobQ family. CobQ subfamily.

Its pathway is cofactor biosynthesis; adenosylcobalamin biosynthesis. Catalyzes amidations at positions B, D, E, and G on adenosylcobyrinic A,C-diamide. NH(2) groups are provided by glutamine, and one molecule of ATP is hydrogenolyzed for each amidation. The polypeptide is Cobyric acid synthase (Rhizorhabdus wittichii (strain DSM 6014 / CCUG 31198 / JCM 15750 / NBRC 105917 / EY 4224 / RW1) (Sphingomonas wittichii)).